The sequence spans 206 residues: LexA repressor (206 aa).

A DNA-binding region (H-T-H motif) is located at residues arginine 28–lysine 48. Residues serine 123 and lysine 160 each act as for autocatalytic cleavage activity in the active site.

It belongs to the peptidase S24 family. In terms of assembly, homodimer.

The enzyme catalyses Hydrolysis of Ala-|-Gly bond in repressor LexA.. Represses a number of genes involved in the response to DNA damage (SOS response), including recA and lexA. In the presence of single-stranded DNA, RecA interacts with LexA causing an autocatalytic cleavage which disrupts the DNA-binding part of LexA, leading to derepression of the SOS regulon and eventually DNA repair. The protein is LexA repressor of Vibrio parahaemolyticus serotype O3:K6 (strain RIMD 2210633).